The sequence spans 178 residues: Crossover junction endodeoxyribonuclease RuvC (178 aa).

Residues Asp-14, Glu-73, and Asp-145 contribute to the active site. 3 residues coordinate Mg(2+): Asp-14, Glu-73, and Asp-145.

The protein belongs to the RuvC family. Homodimer which binds Holliday junction (HJ) DNA. The HJ becomes 2-fold symmetrical on binding to RuvC with unstacked arms; it has a different conformation from HJ DNA in complex with RuvA. In the full resolvosome a probable DNA-RuvA(4)-RuvB(12)-RuvC(2) complex forms which resolves the HJ. Requires Mg(2+) as cofactor.

It is found in the cytoplasm. It catalyses the reaction Endonucleolytic cleavage at a junction such as a reciprocal single-stranded crossover between two homologous DNA duplexes (Holliday junction).. In terms of biological role, the RuvA-RuvB-RuvC complex processes Holliday junction (HJ) DNA during genetic recombination and DNA repair. Endonuclease that resolves HJ intermediates. Cleaves cruciform DNA by making single-stranded nicks across the HJ at symmetrical positions within the homologous arms, yielding a 5'-phosphate and a 3'-hydroxyl group; requires a central core of homology in the junction. The consensus cleavage sequence is 5'-(A/T)TT(C/G)-3'. Cleavage occurs on the 3'-side of the TT dinucleotide at the point of strand exchange. HJ branch migration catalyzed by RuvA-RuvB allows RuvC to scan DNA until it finds its consensus sequence, where it cleaves and resolves the cruciform DNA. The polypeptide is Crossover junction endodeoxyribonuclease RuvC (Nitrosomonas eutropha (strain DSM 101675 / C91 / Nm57)).